The primary structure comprises 320 residues: RNA-binding protein Musashi homolog 1 (320 aa).

Positions 1–14 (MTTTVSTGATAVAT) are enriched in low complexity. The interval 1-48 (MTTTVSTGATAVATLRETSPPVDGHEEARLNADSDDGSHGSQDPGKMF) is disordered. At Thr18 the chain carries Phosphothreonine. A phosphoserine mark is found at Ser19 and Ser34. Over residues 23 to 38 (DGHEEARLNADSDDGS) the composition is skewed to basic and acidic residues. 2 RRM domains span residues 45–124 (GKMF…FPKR) and 134–211 (KKVF…KAQP). 2 required for binding to target mRNAs regions span residues 88 to 93 (FGFITF) and 177 to 182 (FGFVTF).

Belongs to the Musashi family. In terms of tissue distribution, expressed in the gut and in AVA, AFD, RMD, RMED, RMEV, RMER and RMEL neurons (at protein level). In the tail expressed in neurons and all the ray sensilla. Expressed in male specific C1-C4 neurons.

It is found in the cytoplasm. The protein resides in the perikaryon. Functionally, RNA binding protein that regulates the expression of target mRNAs at the translation level. Binds RNA containing the 5'-[GA]U(1-3)AGU-3' motif located in the 3' UTR of the target mRNA. Binds to the mRNA of three Arp2/3 complex components arx-1, arx-2 and arx-3 and negatively regulates their translation during association learning. Plays a role in time-dependent memory loss and the retention of conditioned behavior over time, probably through negative regulation of the Arp2/3 actin cytoskeleton branching complex and regulation of synapse size. Required for two aspects of male mating behavior: turning around the hermaphrodite head or tail and vulva location. This chain is RNA-binding protein Musashi homolog 1, found in Caenorhabditis elegans.